A 295-amino-acid polypeptide reads, in one-letter code: ATP synthase gamma chain (295 aa).

It belongs to the ATPase gamma chain family. As to quaternary structure, F-type ATPases have 2 components, CF(1) - the catalytic core - and CF(0) - the membrane proton channel. CF(1) has five subunits: alpha(3), beta(3), gamma(1), delta(1), epsilon(1). CF(0) has three main subunits: a, b and c.

The protein resides in the cell inner membrane. Produces ATP from ADP in the presence of a proton gradient across the membrane. The gamma chain is believed to be important in regulating ATPase activity and the flow of protons through the CF(0) complex. The sequence is that of ATP synthase gamma chain from Paraburkholderia phymatum (strain DSM 17167 / CIP 108236 / LMG 21445 / STM815) (Burkholderia phymatum).